Here is an 85-residue protein sequence, read N- to C-terminus: Exodeoxyribonuclease 7 small subunit (85 aa).

The segment at 66 to 85 (SGEGEEVPLDTPDAEDGDGE) is disordered. Residues 68–85 (EGEEVPLDTPDAEDGDGE) show a composition bias toward acidic residues.

This sequence belongs to the XseB family. In terms of assembly, heterooligomer composed of large and small subunits.

It is found in the cytoplasm. It carries out the reaction Exonucleolytic cleavage in either 5'- to 3'- or 3'- to 5'-direction to yield nucleoside 5'-phosphates.. Its function is as follows. Bidirectionally degrades single-stranded DNA into large acid-insoluble oligonucleotides, which are then degraded further into small acid-soluble oligonucleotides. The chain is Exodeoxyribonuclease 7 small subunit from Thioalkalivibrio sulfidiphilus (strain HL-EbGR7).